Here is a 621-residue protein sequence, read N- to C-terminus: tRNA uridine 5-carboxymethylaminomethyl modification enzyme MnmG (621 aa).

9-14 (GGGHAG) is a binding site for FAD. An NAD(+)-binding site is contributed by 268 to 282 (GPRYCPSIEDKINRF).

Belongs to the MnmG family. As to quaternary structure, homodimer. Heterotetramer of two MnmE and two MnmG subunits. It depends on FAD as a cofactor.

It localises to the cytoplasm. NAD-binding protein involved in the addition of a carboxymethylaminomethyl (cmnm) group at the wobble position (U34) of certain tRNAs, forming tRNA-cmnm(5)s(2)U34. The protein is tRNA uridine 5-carboxymethylaminomethyl modification enzyme MnmG of Campylobacter fetus subsp. fetus (strain 82-40).